Reading from the N-terminus, the 453-residue chain is Adenylyltransferase and sulfurtransferase MOCS3 (453 aa).

Position 62 is a phosphothreonine (Thr-62). ATP-binding positions include Gly-101, Asp-122, 129–133, Lys-146, and 190–191; these read SNFHR and DN. Zn(2+) contacts are provided by Cys-231 and Cys-234. Cys-248 functions as the Glycyl thioester intermediate; for adenylyltransferase activity in the catalytic mechanism. Residues Cys-306 and Cys-309 each coordinate Zn(2+). In terms of domain architecture, Rhodanese spans 355–451; the sequence is QAKPHLLIDV…WTSNIDPNFP (97 aa). The active-site Cysteine persulfide intermediate; for sulfurtransferase activity is Cys-410.

In the N-terminal section; belongs to the HesA/MoeB/ThiF family. UBA4 subfamily. Zn(2+) serves as cofactor.

It localises to the cytoplasm. Its subcellular location is the cytosol. It catalyses the reaction [molybdopterin-synthase sulfur-carrier protein]-C-terminal Gly-Gly + ATP + H(+) = [molybdopterin-synthase sulfur-carrier protein]-C-terminal Gly-Gly-AMP + diphosphate. The catalysed reaction is [molybdopterin-synthase sulfur-carrier protein]-C-terminal Gly-Gly-AMP + S-sulfanyl-L-cysteinyl-[cysteine desulfurase] + AH2 = [molybdopterin-synthase sulfur-carrier protein]-C-terminal-Gly-aminoethanethioate + L-cysteinyl-[cysteine desulfurase] + A + AMP + 2 H(+). Its pathway is tRNA modification; 5-methoxycarbonylmethyl-2-thiouridine-tRNA biosynthesis. It functions in the pathway cofactor biosynthesis; molybdopterin biosynthesis. Functionally, plays a central role in 2-thiolation of mcm(5)S(2)U at tRNA wobble positions of cytosolic tRNA(Lys), tRNA(Glu) and tRNA(Gln). Also essential during biosynthesis of the molybdenum cofactor. Acts by mediating the C-terminal thiocarboxylation of sulfur carriers URM1 and MOCS2A. Its N-terminus first activates URM1 and MOCS2A as acyl-adenylates (-COAMP), then the persulfide sulfur on the catalytic cysteine is transferred to URM1 and MOCS2A to form thiocarboxylation (-COSH) of their C-terminus. The reaction probably involves hydrogen sulfide that is generated from the persulfide intermediate and that acts as a nucleophile towards URM1 and MOCS2A. Subsequently, a transient disulfide bond is formed. Does not use thiosulfate as sulfur donor; NFS1 probably acting as a sulfur donor for thiocarboxylation reactions. The polypeptide is Adenylyltransferase and sulfurtransferase MOCS3 (Drosophila sechellia (Fruit fly)).